Consider the following 265-residue polypeptide: Protein synthesis inhibitor PD-S2 (265 aa).

Intrachain disulfides connect Cys-34-Cys-262 and Cys-88-Cys-110. A glycan (N-linked (GlcNAc...) asparagine) is linked at Asn-120.

It belongs to the ribosome-inactivating protein family. Type 1 RIP subfamily. In terms of processing, glycosylated. Seeds.

It carries out the reaction Endohydrolysis of the N-glycosidic bond at one specific adenosine on the 28S rRNA.. Its function is as follows. Inhibits protein synthesis in animal cells. Useful as immunotoxin for pharmacological applications. This chain is Protein synthesis inhibitor PD-S2, found in Phytolacca dioica (Bella sombra tree).